We begin with the raw amino-acid sequence, 384 residues long: Cyanate transport protein CynX (384 aa).

The next 12 membrane-spanning stretches (helical) occupy residues 3–23, 34–54, 68–88, 89–109, 122–142, 153–173, 204–224, 235–255, 263–283, 287–307, 322–342, and 354–374; these read LVLVLIGLNMRPLLTSVGPLL, FSVAALLTALPVVTMGGLALA, VAISLLLIAVGALMRELYPQS, ALLLSSALLGGVGIGIIQAVM, PLVMGLWSAALMGGGGLGAAI, WYQTLAWWALPAVVALFAWWW, YFGLINGGYASLIAWLPAFYI, SLLALMTLGQAAGALLMPAMA, LLMLALVLQLVGFCGFIWLPM, VLWAMVCGLGLGGAFPLCLLL, VAFMQGIGFIIAGLAPWFSGV, and WAFHALCVVGLMIITLRFAPV.

The protein belongs to the major facilitator superfamily. Cyanate porter (TC 2.A.1.17) family.

It is found in the cell inner membrane. Its function is as follows. This protein is part of an active transport system that transports exogenous cyanate into E.coli cells. The sequence is that of Cyanate transport protein CynX (cynX) from Escherichia coli (strain K12).